A 34-amino-acid polypeptide reads, in one-letter code: DDIT3 upstream open reading frame protein (34 aa).

As to quaternary structure, interacts with DDIT3 (isoform 1).

It is found in the nucleus. It localises to the cytoplasm. Product of the upstream open reading frame (uORF) of DDIT3/CHOP that is specifically produced in absence of stress, thereby preventing translation of downstream stress effector DDIT3/CHOP. The protein is DDIT3 upstream open reading frame protein of Mus musculus (Mouse).